An 89-amino-acid polypeptide reads, in one-letter code: Small ribosomal subunit protein uS15 (89 aa).

The protein belongs to the universal ribosomal protein uS15 family. As to quaternary structure, part of the 30S ribosomal subunit. Forms a bridge to the 50S subunit in the 70S ribosome, contacting the 23S rRNA.

One of the primary rRNA binding proteins, it binds directly to 16S rRNA where it helps nucleate assembly of the platform of the 30S subunit by binding and bridging several RNA helices of the 16S rRNA. Its function is as follows. Forms an intersubunit bridge (bridge B4) with the 23S rRNA of the 50S subunit in the ribosome. This Rhizobium meliloti (strain 1021) (Ensifer meliloti) protein is Small ribosomal subunit protein uS15.